The primary structure comprises 346 residues: UDP-N-acetylenolpyruvoylglucosamine reductase (346 aa).

The 172-residue stretch at Phe-23–Val-194 folds into the FAD-binding PCMH-type domain. The active site involves Arg-170. The active-site Proton donor is Ser-246. Glu-342 is a catalytic residue.

The protein belongs to the MurB family. Requires FAD as cofactor.

It is found in the cytoplasm. The catalysed reaction is UDP-N-acetyl-alpha-D-muramate + NADP(+) = UDP-N-acetyl-3-O-(1-carboxyvinyl)-alpha-D-glucosamine + NADPH + H(+). It functions in the pathway cell wall biogenesis; peptidoglycan biosynthesis. Functionally, cell wall formation. The protein is UDP-N-acetylenolpyruvoylglucosamine reductase of Paraburkholderia phytofirmans (strain DSM 17436 / LMG 22146 / PsJN) (Burkholderia phytofirmans).